Consider the following 303-residue polypeptide: Acetaldehyde dehydrogenase (303 aa).

The Acyl-thioester intermediate role is filled by cysteine 130. NAD(+) is bound by residues 161 to 169 and asparagine 272; that span reads SVGPGTRKN.

It belongs to the acetaldehyde dehydrogenase family.

It catalyses the reaction acetaldehyde + NAD(+) + CoA = acetyl-CoA + NADH + H(+). This Verminephrobacter eiseniae (strain EF01-2) protein is Acetaldehyde dehydrogenase.